The primary structure comprises 265 residues: Signal peptidase I (265 aa).

Residues 1 to 19 (MQIDTKTNTNKTTAQEWKS) lie on the Cytoplasmic side of the membrane. A helical membrane pass occupies residues 20-40 (FAFVVCIALLIRILIMEPFTV). Residues 41–265 (PTGSMKATIL…IFRNLYNTDE (225 aa)) lie on the Periplasmic side of the membrane. Residues S44 and K107 contribute to the active site.

Belongs to the peptidase S26 family.

The protein localises to the cell inner membrane. It carries out the reaction Cleavage of hydrophobic, N-terminal signal or leader sequences from secreted and periplasmic proteins.. This Rickettsia canadensis (strain McKiel) protein is Signal peptidase I (lepB).